The sequence spans 349 residues: Phosphoribosylformylglycinamidine cyclo-ligase (349 aa).

Belongs to the AIR synthase family.

It localises to the cytoplasm. It catalyses the reaction 2-formamido-N(1)-(5-O-phospho-beta-D-ribosyl)acetamidine + ATP = 5-amino-1-(5-phospho-beta-D-ribosyl)imidazole + ADP + phosphate + H(+). Its pathway is purine metabolism; IMP biosynthesis via de novo pathway; 5-amino-1-(5-phospho-D-ribosyl)imidazole from N(2)-formyl-N(1)-(5-phospho-D-ribosyl)glycinamide: step 2/2. In Jannaschia sp. (strain CCS1), this protein is Phosphoribosylformylglycinamidine cyclo-ligase.